The chain runs to 341 residues: MKIRLENVVKTFDTFRAVRDVSLDIESGELLALLGPSGSGKTTILRMVAGLEYSDGGRIFFGDEDATNIPVRDRGVGFVFQHYALFPHMTLHENIAFGMKVSKVKRDKAAIDARVKELLNLVKLDGLGDRFPAQISGGQRQRVALARALSVDPKVLLLDEPFGALDANVRRDLRRWLREIHDSLGITTIFVTHDQEEALDLADRVVILNQGGIVQQGTPKEVCRQPNSSFVMRFLGDANRVSGVARGGKVYVGENELPFSYTQGDGAVDIYARPGDLEWEDLHEGIPASVERVLDRAGERRVIASTDGGDILEFDVPPENDVTAGDRGSVIIRRAKIFPVA.

Residues 3-235 (IRLENVVKTF…PNSSFVMRFL (233 aa)) form the ABC transporter domain. An ATP-binding site is contributed by 35-42 (GPSGSGKT).

The protein belongs to the ABC transporter superfamily. Sulfate/tungstate importer (TC 3.A.1.6) family. The complex is composed of two ATP-binding proteins (CysA), two transmembrane proteins (CysT and CysW) and a solute-binding protein (CysP).

The protein resides in the cell inner membrane. It carries out the reaction sulfate(out) + ATP + H2O = sulfate(in) + ADP + phosphate + H(+). The enzyme catalyses thiosulfate(out) + ATP + H2O = thiosulfate(in) + ADP + phosphate + H(+). In terms of biological role, part of the ABC transporter complex CysAWTP involved in sulfate/thiosulfate import. Responsible for energy coupling to the transport system. This Agrobacterium fabrum (strain C58 / ATCC 33970) (Agrobacterium tumefaciens (strain C58)) protein is Sulfate/thiosulfate import ATP-binding protein CysA 2.